A 59-amino-acid chain; its full sequence is Large ribosomal subunit protein uL30 (59 aa).

The protein belongs to the universal ribosomal protein uL30 family. Part of the 50S ribosomal subunit.

The sequence is that of Large ribosomal subunit protein uL30 from Alkaliphilus metalliredigens (strain QYMF).